The sequence spans 389 residues: Chalcone synthase 1 (389 aa).

The active site involves cysteine 164.

This sequence belongs to the thiolase-like superfamily. Chalcone/stilbene synthases family.

The catalysed reaction is (E)-4-coumaroyl-CoA + 3 malonyl-CoA + 3 H(+) = 2',4,4',6'-tetrahydroxychalcone + 3 CO2 + 4 CoA. Its pathway is secondary metabolite biosynthesis; flavonoid biosynthesis. The primary product of this enzyme is 4,2',4',6'-tetrahydroxychalcone (also termed naringenin-chalcone or chalcone) which can under specific conditions spontaneously isomerize into naringenin. In Solanum lycopersicum (Tomato), this protein is Chalcone synthase 1 (CHS1).